The following is a 354-amino-acid chain: Fructose-bisphosphate aldolase 2 (354 aa).

Residue Ser50 coordinates D-glyceraldehyde 3-phosphate. Asp83 acts as the Proton donor in catalysis. Residues His84, Asp105, Glu142, and His198 each contribute to the Zn(2+) site. Gly199 lines the dihydroxyacetone phosphate pocket. His232 contributes to the Zn(2+) binding site. Dihydroxyacetone phosphate contacts are provided by residues Gly233–Ser235 and Asn275–Thr278.

Belongs to the class II fructose-bisphosphate aldolase family. Homodimer. It depends on Zn(2+) as a cofactor.

The enzyme catalyses beta-D-fructose 1,6-bisphosphate = D-glyceraldehyde 3-phosphate + dihydroxyacetone phosphate. The protein operates within carbohydrate biosynthesis; Calvin cycle. It participates in carbohydrate degradation; glycolysis; D-glyceraldehyde 3-phosphate and glycerone phosphate from D-glucose: step 4/4. Its function is as follows. Catalyzes the aldol condensation of dihydroxyacetone phosphate (DHAP or glycerone-phosphate) with glyceraldehyde 3-phosphate (G3P) to form fructose 1,6-bisphosphate (FBP) in gluconeogenesis and the reverse reaction in glycolysis. The sequence is that of Fructose-bisphosphate aldolase 2 (cfxB) from Cereibacter sphaeroides (Rhodobacter sphaeroides).